The primary structure comprises 514 residues: Voltage-gated potassium channel regulatory subunit KCNG1 (514 aa).

The Cytoplasmic segment spans residues 1-224 (MTLLPGDNSD…DMVEKPHSGL (224 aa)). Residues 181 to 196 (EREDEEEALDSEDQES) are compositionally biased toward acidic residues. The interval 181–205 (EREDEEEALDSEDQESEGPSTSEGR) is disordered. Residues 225–246 (PGKVFACLSVLFVTVTAVNLSV) traverse the membrane as a helical segment. Topologically, residues 247 to 267 (STLPSLREEEEQGQCSQMCHN) are extracellular. A helical membrane pass occupies residues 268 to 289 (VFIVESVCVGWFSLEFLLRFIQ). The Cytoplasmic portion of the chain corresponds to 290–300 (APSKFAFLRSP). A helical transmembrane segment spans residues 301 to 321 (LTLIDLVAILPYYVTLLVDGA). Over 322 to 338 (ASSRRKPSTGNSYLDKV) the chain is Extracellular. The helical; Voltage-sensor transmembrane segment at 339-359 (GLVLRVLRALRILYVMRLARH) threads the bilayer. The Cytoplasmic portion of the chain corresponds to 360–374 (SLGLQTLGLTARRCT). Residues 375–396 (REFGLLLLFLCVAIALFAPLLY) form a helical membrane-spanning segment. The Extracellular portion of the chain corresponds to 397 to 411 (VIENEMADSPEFTSI). The helical intramembrane region spans 412-423 (PACYWWAVITMT). Residues 424–429 (TVGYGD) carry the Selectivity filter motif. Residues 424–431 (TVGYGDMV) lie within the membrane without spanning it. At 432–438 (PRSTPGQ) the chain is on the extracellular side. The chain crosses the membrane as a helical span at residues 439-467 (VVALSSILSGILLMAFPVTSIFHTFSRSY). At 468–514 (LELKQEQERVLIRRAQYLIKTKSQLSGMSQDSDILFGSASSDTRDNN) the chain is on the cytoplasmic side.

Belongs to the potassium channel family. G (TC 1.A.1.2) subfamily. Kv6.1/KCNG1 sub-subfamily. As to quaternary structure, heterotetramer with KCNB1 or KCNB2.

The protein resides in the cell membrane. Regulatory alpha-subunit of the voltage-gated potassium (Kv) channel which, when coassembled with KCNB1 or KCNB2, can modulate their expression and their gating kinetics by acting on deactivation upon repolarization and inactivation during maintained depolarization. Potassium channel subunit that does not form functional channels by itself. The sequence is that of Voltage-gated potassium channel regulatory subunit KCNG1 from Rattus norvegicus (Rat).